Consider the following 96-residue polypeptide: Putative pterin-4-alpha-carbinolamine dehydratase (96 aa).

It belongs to the pterin-4-alpha-carbinolamine dehydratase family.

The enzyme catalyses (4aS,6R)-4a-hydroxy-L-erythro-5,6,7,8-tetrahydrobiopterin = (6R)-L-erythro-6,7-dihydrobiopterin + H2O. This Prochlorococcus marinus (strain MIT 9215) protein is Putative pterin-4-alpha-carbinolamine dehydratase.